We begin with the raw amino-acid sequence, 694 residues long: Nuclear cap-binding protein subunit 3 (694 aa).

Positions 1–47 are disordered; it reads MAAVRSLRVSVKSDSASDRSESDSESDSDRDAREAEPMEVEEGEVEL. The span at 15-36 shows a compositional bias: basic and acidic residues; the sequence is SASDRSESDSESDSDRDAREAE. Residues 37–47 show a composition bias toward acidic residues; it reads PMEVEEGEVEL. The interval 126–187 is RNA recognition motif (RRM) domain; that stretch reads EALHMSGVDD…LSRMPDKEEV (62 aa). Residues 155–158 carry the WLDD motif; essential for 7-methylguanosine-containing mRNA cap binding motif; that stretch reads WIDD. Disordered stretches follow at residues 183-277, 336-430, and 461-694; these read DKEE…VKPF, ILKT…MDYD, and LRNS…DSDS. The segment covering 189 to 203 has biased composition (polar residues); the sequence is NTDSSKPSELPVQTQ. Acidic residues predominate over residues 212–235; the sequence is DDDDDDDEEEEGEVDDDDDDDEED. A compositionally biased stretch (basic and acidic residues) spans 236 to 264; the sequence is EKARDIEDETEKKPQETRETSLSQAERDS. Acidic residues predominate over residues 368–386; it reads EPIEEEEEEEEDGEEDMDA. Over residues 387–404 the composition is skewed to basic and acidic residues; sequence DDRVVEYKDRGEKERGPR. Positions 477-496 are enriched in gly residues; it reads IGGGGGGGSGGAVEGRGEGG. Basic and acidic residues-rich tracts occupy residues 501 to 517, 563 to 595, and 605 to 618; these read TSEK…EKRQ, SRRE…DKKT, and SHKD…DKPS. Residues 634–646 show a composition bias toward acidic residues; the sequence is DSDGVEDEDEEDD. Residues 685–694 are compositionally biased toward low complexity; that stretch reads DGSNGSDSDS.

The protein belongs to the NCBP3 family. In terms of assembly, component of an alternative cap-binding complex (CBC) composed of NCBP1/CBP80 and NCBP3.

Its subcellular location is the nucleus. It is found in the cytoplasm. Its function is as follows. Associates with NCBP1/CBP80 to form an alternative cap-binding complex (CBC) which plays a key role in mRNA export. NCBP3 serves as adapter protein linking the capped RNAs (m7GpppG-capped RNA) to NCBP1/CBP80. Unlike the conventional CBC with NCBP2 which binds both small nuclear RNA (snRNA) and messenger (mRNA) and is involved in their export from the nucleus, the alternative CBC with NCBP3 does not bind snRNA and associates only with mRNA thereby playing a role in only mRNA export. The polypeptide is Nuclear cap-binding protein subunit 3 (Danio rerio (Zebrafish)).